Here is a 306-residue protein sequence, read N- to C-terminus: D-alanine--D-alanine ligase (306 aa).

Catalysis depends on residues E18 and S150. The ATP-grasp domain occupies 104 to 303 (KMLWKAFGLP…FEQLVVKILE (200 aa)). ATP is bound at residue 134–189 (VAKLGLPLMVKPSLEGSSVGLTKVKAVEELKSAVEYALKFDNTILIEEWLAGDELT). Mg(2+) contacts are provided by D257, E270, and N272. The active site involves S281.

It belongs to the D-alanine--D-alanine ligase family. Mg(2+) is required as a cofactor. The cofactor is Mn(2+).

The protein localises to the cytoplasm. It carries out the reaction 2 D-alanine + ATP = D-alanyl-D-alanine + ADP + phosphate + H(+). The protein operates within cell wall biogenesis; peptidoglycan biosynthesis. Functionally, cell wall formation. The sequence is that of D-alanine--D-alanine ligase from Haemophilus influenzae (strain ATCC 51907 / DSM 11121 / KW20 / Rd).